Reading from the N-terminus, the 26-residue chain is Oxyopinin-3b (26 aa).

As to expression, expressed by the venom gland.

It is found in the secreted. In terms of biological role, may have cytolytic and antimicrobial activity. This Oxyopes takobius (Lynx spider) protein is Oxyopinin-3b.